Consider the following 429-residue polypeptide: ATP-sensitive inward rectifier potassium channel 12 (429 aa).

Over 1–76 (MTAGRVNPYS…IADMFTTCVD (76 aa)) the chain is Cytoplasmic. The helical transmembrane segment at 77–103 (IRWRYMLLLFSLAFLVSWLLFGLIFWL) threads the bilayer. Positions 78 and 80 each coordinate a 1,2-diacyl-sn-glycero-3-phospho-(1D-myo-inositol-4,5-bisphosphate). The Extracellular segment spans residues 104 to 129 (IALIHGDLENPGGDDTFKPCVLQVNG). A disulfide bridge connects residues cysteine 123 and cysteine 155. Residues 130-146 (FVAAFLFSIETQTTIGY) constitute an intramembrane region (helical; Pore-forming). The K(+) site is built by threonine 143, isoleucine 144, glycine 145, and tyrosine 146. The short motif at 143-148 (TIGYGF) is the Selectivity filter element. The Extracellular segment spans residues 147–155 (GFRCVTEEC). A helical transmembrane segment spans residues 156–183 (PLAVFMVVVQSIVGCIIDSFMIGAIMAK). Lysine 183 and lysine 188 together coordinate a 1,2-diacyl-sn-glycero-3-phospho-(1D-myo-inositol-4,5-bisphosphate). Over 184–429 (MARPKKRAQT…QRSYRRESEI (246 aa)) the chain is Cytoplasmic. The disordered stretch occupies residues 386–407 (RDEDEEDDDSRGLDDLSPDNRH). The span at 395–407 (SRGLDDLSPDNRH) shows a compositional bias: basic and acidic residues.

The protein belongs to the inward rectifier-type potassium channel family. Homotetramer.

Its subcellular location is the membrane. The protein resides in the cell membrane. It is found in the sarcolemma. It localises to the T-tubule. The catalysed reaction is K(+)(in) = K(+)(out). Its activity is regulated as follows. Activated by phosphatidylinositol 4,5-bisphosphate (PtdIns(4,5)P2). PtdIns(4,5)P2 binding to the cytoplasmic side of the channel triggers a conformation change leading to channel opening. Inward rectifying potassium channel that probably participates in controlling the resting membrane potential in electrically excitable cells. Probably participates in establishing action potential waveform and excitability of neuronal and muscle tissues. Inward rectifier potassium channels are characterized by a greater tendency to allow potassium to flow into the cell rather than out of it. Their voltage dependence is regulated by the concentration of extracellular potassium; as external potassium is raised, the voltage range of the channel opening shifts to more positive voltages. The inward rectification is mainly due to the blockage of outward current by internal magnesium. This is ATP-sensitive inward rectifier potassium channel 12 (KCNJ12) from Gallus gallus (Chicken).